The primary structure comprises 209 residues: MSRELAEWLGHMGIRDRRVLDAIAELDRARFVPPHLVAEAYADRPLPIGFGQTISQPFVVAFMTEALGLDGGERVLEVGTGSGYQTALLARLAGEVWSVEIVPGLAARARALLLGDLGLANVHLREGDGALGWPEAAPFDRILVTAAAPQVPPPLRAQLAPGGRMVLPVGEAESEQVLRVLERAADGIEEIEDLLPVRFVPLTHLPPAV.

Residue S55 is part of the active site.

Belongs to the methyltransferase superfamily. L-isoaspartyl/D-aspartyl protein methyltransferase family.

The protein localises to the cytoplasm. The enzyme catalyses [protein]-L-isoaspartate + S-adenosyl-L-methionine = [protein]-L-isoaspartate alpha-methyl ester + S-adenosyl-L-homocysteine. Functionally, catalyzes the methyl esterification of L-isoaspartyl residues in peptides and proteins that result from spontaneous decomposition of normal L-aspartyl and L-asparaginyl residues. It plays a role in the repair and/or degradation of damaged proteins. This is Protein-L-isoaspartate O-methyltransferase from Anaeromyxobacter dehalogenans (strain 2CP-C).